The chain runs to 194 residues: Metalloproteinase inhibitor 2 (194 aa).

Cysteine 1 contacts Zn(2+). Involved in metalloproteinase-binding regions lie at residues 1-4 and 69-70; these read CSCS and SA. 6 cysteine pairs are disulfide-bonded: cysteine 1/cysteine 72, cysteine 3/cysteine 101, cysteine 13/cysteine 126, cysteine 128/cysteine 175, cysteine 133/cysteine 138, and cysteine 146/cysteine 167. An NTR domain is found at 1-126; that stretch reads CSCSPVHPQQ…SLNHRYQMGC (126 aa).

It belongs to the protease inhibitor I35 (TIMP) family. As to quaternary structure, interacts (via the C-terminal) with MMP2 (via the C-terminal PEX domain); the interaction inhibits the MMP2 activity. Post-translationally, the activity of TIMP2 is dependent on the presence of disulfide bonds.

Its subcellular location is the secreted. In terms of biological role, complexes with metalloproteinases (such as collagenases) and irreversibly inactivates them by binding to their catalytic zinc cofactor. The sequence is that of Metalloproteinase inhibitor 2 (TIMP2) from Oryctolagus cuniculus (Rabbit).